A 131-amino-acid chain; its full sequence is Putative protein PTGES3L (131 aa).

In terms of domain architecture, CS spans Arg-3–Thr-91.

Belongs to the p23/wos2 family.

The sequence is that of Putative protein PTGES3L (Ptges3l) from Mus musculus (Mouse).